A 733-amino-acid polypeptide reads, in one-letter code: tRNA (guanine(27)-N(2))-dimethyltransferase (733 aa).

Positions Met-1 to Glu-18 are enriched in acidic residues. A disordered region spans residues Met-1–Ser-78. Thr-26 carries the post-translational modification Phosphothreonine. 2 stretches are compositionally biased toward low complexity: residues Pro-39–Pro-49 and Pro-57–Pro-73. Ser-66 bears the Phosphoserine mark. The Nucleolar localization signal signature appears at His-135–Arg-139. The C2H2-type zinc finger occupies Tyr-184 to His-206. The region spanning Glu-227–Leu-688 is the Trm1 methyltransferase domain. 4 residues coordinate S-adenosyl-L-methionine: Arg-260, Asp-307, Asp-357, and Ala-358. Zn(2+) is bound by residues Cys-488, Cys-491, Cys-513, and Cys-515. Lys-585 is covalently cross-linked (Glycyl lysine isopeptide (Lys-Gly) (interchain with G-Cter in SUMO2)). Phosphoserine occurs at positions 612 and 707.

This sequence belongs to the class I-like SAM-binding methyltransferase superfamily. Trm1 family. In terms of tissue distribution, widely expressed.

The protein resides in the nucleus. The protein localises to the nucleolus. The enzyme catalyses guanosine(27) in tRNA(Tyr) + 2 S-adenosyl-L-methionine = N(2)-dimethylguanosine(27) in tRNA(Tyr) + 2 S-adenosyl-L-homocysteine + 2 H(+). Specifically dimethylates a single guanine residue at position 27 of tRNA(Tyr) using S-adenosyl-L-methionine as donor of the methyl groups. Dimethylation at position 27 of tRNA(Tyr) is required for efficient translation of tyrosine codons. Also required to maintain 3-(3-amino-3-carboxypropyl)uridine (acp3U) in the D-loop of several cytoplasmic tRNAs. This is tRNA (guanine(27)-N(2))-dimethyltransferase from Homo sapiens (Human).